A 408-amino-acid polypeptide reads, in one-letter code: Putative ankyrin repeat protein L483 (408 aa).

ANK repeat units lie at residues 78–107 (SLNK…DIKA), 108–137 (GDDC…NIRA), 139–167 (NDYA…DIRA), 168–197 (NNDY…NIRT), 198–227 (ENDY…DIRA), 229–257 (NDYA…NIRV), 259–287 (NDYA…NIRA), 288–317 (RCDF…DIRS), 318–347 (QNDY…DIRT), 349–377 (DDYA…NIRA), and 378–407 (KDDY…VLTK).

This is Putative ankyrin repeat protein L483 from Acanthamoeba polyphaga (Amoeba).